The chain runs to 87 residues: Putative defensin-like protein 231 (87 aa).

The first 26 residues, 1 to 26 (MKFATCFLVSYVLVFLVLSVCKEVEA), serve as a signal peptide directing secretion. 4 cysteine pairs are disulfide-bonded: C30/C85, C40/C66, C48/C79, and C64/C81.

This sequence belongs to the DEFL family.

It localises to the secreted. The chain is Putative defensin-like protein 231 (SCRL25) from Arabidopsis thaliana (Mouse-ear cress).